Here is a 69-residue protein sequence, read N- to C-terminus: Toxin Tma2 (69 aa).

The LCN-type CS-alpha/beta domain maps to 2-66 (KDDYPVDTAE…SPTKTSKRCN (65 aa)). Disulfide bonds link cysteine 14-cysteine 65, cysteine 18-cysteine 41, cysteine 27-cysteine 48, and cysteine 31-cysteine 50.

The protein belongs to the long (4 C-C) scorpion toxin superfamily. Sodium channel inhibitor family. As to expression, expressed by the venom gland.

It is found in the secreted. Functionally, inhibits voltage-gated sodium channels (Nav). This toxin shows insect lethality against crickets. The polypeptide is Toxin Tma2 (Tityus macrochirus (Scorpion)).